Here is a 104-residue protein sequence, read N- to C-terminus: Gastrin (104 aa).

An N-terminal signal peptide occupies residues 1 to 21 (MQRLCVYVLILALALATFSEA). Residues 22 to 58 (SWKPRSRLQDAPSGPGANRGLEPHGLDQLGPASHHRR) constitute a propeptide that is removed on maturation. The disordered stretch occupies residues 22–70 (SWKPRSRLQDAPSGPGANRGLEPHGLDQLGPASHHRRQLGLQGPPQLVA). Glutamine 59 and glutamine 76 each carry pyrrolidone carboxylic acid. At tyrosine 87 the chain carries Sulfotyrosine. Position 92 is a phenylalanine amide (phenylalanine 92). Phosphoserine is present on serine 96. Residues 96–104 (SAEEGDQRP) constitute a propeptide that is removed on maturation.

The protein belongs to the gastrin/cholecystokinin family.

The protein resides in the secreted. Its function is as follows. Gastrin stimulates the stomach mucosa to produce and secrete hydrochloric acid and the pancreas to secrete its digestive enzymes. It also stimulates smooth muscle contraction and increases blood circulation and water secretion in the stomach and intestine. The protein is Gastrin (GAST) of Canis lupus familiaris (Dog).